A 91-amino-acid polypeptide reads, in one-letter code: MTRSLKKGPFVDHHLLAKVEKAVATKDKKPVKTWSRRSMVLPEFIGLTIAVHNGKQHVPVYVTDQMVGHKLGEFALTRTFKGHPADKKVKK.

It belongs to the universal ribosomal protein uS19 family.

In terms of biological role, protein S19 forms a complex with S13 that binds strongly to the 16S ribosomal RNA. This chain is Small ribosomal subunit protein uS19, found in Verminephrobacter eiseniae (strain EF01-2).